We begin with the raw amino-acid sequence, 774 residues long: 5-methyltetrahydropteroyltriglutamate--homocysteine methyltransferase (774 aa).

5-methyltetrahydropteroyltri-L-glutamate contacts are provided by residues 24–27 (RELK) and Lys120. L-homocysteine-binding positions include 446–448 (IGS) and Glu499. L-methionine is bound by residues 446–448 (IGS) and Glu499. Trp576 serves as a coordination point for 5-methyltetrahydropteroyltri-L-glutamate. Asp614 contributes to the L-homocysteine binding site. Asp614 is a binding site for L-methionine. Residue Glu620 coordinates 5-methyltetrahydropteroyltri-L-glutamate. Positions 656, 658, and 680 each coordinate Zn(2+). Catalysis depends on His709, which acts as the Proton donor. Cys741 provides a ligand contact to Zn(2+).

This sequence belongs to the vitamin-B12 independent methionine synthase family. The cofactor is Zn(2+).

It carries out the reaction 5-methyltetrahydropteroyltri-L-glutamate + L-homocysteine = tetrahydropteroyltri-L-glutamate + L-methionine. Its pathway is amino-acid biosynthesis; L-methionine biosynthesis via de novo pathway; L-methionine from L-homocysteine (MetE route): step 1/1. Its function is as follows. Catalyzes the transfer of a methyl group from 5-methyltetrahydrofolate to homocysteine resulting in methionine formation. This is 5-methyltetrahydropteroyltriglutamate--homocysteine methyltransferase from Streptomyces griseus subsp. griseus (strain JCM 4626 / CBS 651.72 / NBRC 13350 / KCC S-0626 / ISP 5235).